The sequence spans 249 residues: Cell division protein DivIB (249 aa).

At 1–19 (MKEENEYIVKRRKKRRRKR) the chain is on the cytoplasmic side. The helical transmembrane segment at 20–40 (ITIFLFLLICILVTLCLKLPY) threads the bilayer. Residues 41–109 (FNIKYINVEG…NTIDIIVKER (69 aa)) form the POTRA domain. The Extracellular segment spans residues 41–249 (FNIKYINVEG…KGNPVYSLQQ (209 aa)).

Belongs to the FtsQ/DivIB family. DivIB subfamily.

Its subcellular location is the cell membrane. In terms of biological role, cell division protein that may be involved in stabilizing or promoting the assembly of the division complex. This chain is Cell division protein DivIB, found in Clostridium acetobutylicum (strain ATCC 824 / DSM 792 / JCM 1419 / IAM 19013 / LMG 5710 / NBRC 13948 / NRRL B-527 / VKM B-1787 / 2291 / W).